The following is a 970-amino-acid chain: MAVSMREVDAVFQGAGQKDGLEIWRIEKLQAVPVPKESHGRFFTGDSYVILKTTALKNGSFRHDIHYWLGKDTSQDEAGTAAIKTVELDAALGGRAVQYREVQGNETERFLSYFKPCIIPEEGGIASGFRHTEINEREHVTRLFVCRGKHTVHVKEVPFARSSLNHDDIFILDTKSKIFQFNGSNSSIQERAKALEVVQYLKDSNHEGKCDVGSVEDGKLMADADAGEFWGLFGGFAPLPRKTFSDLNGKDSAFSSKLICLNKGQTVPVDFDVLTRELLDSTKCYLLDCGSEIYVWMGRETPLEERKRAGSAAEELLREVNRPKSHIVRLMEGFETVIFRSKFSKWPKKADAVVSDESRGKVAALLKRQGFNVKGLAKAAPVKEEPQPQIDCTGNLQVWRVNGTEKTFLSFSEQCKFYSGDCYIFQYSYPGEEGEECLIGTWFGKKSVQDEKTTAISVASKMVESLKFQAVMVRLYEGKEPAEFFSIFQNLVIFKGGVSTGYKKFVSENGIEDDTYSENGVALFRVQGSGPENMQAIQVDTAATSLNSSYCYVLHDGDTLFTWIGNLSSSMDQELAERQLDVIKPNLQSRMLKEGSEYDQFWKLLGVKSEYPSQKIAKDQESDPHLFSCTFSKGVLKVREIFNFTQDDLMTEDVFILDCHSCVFVWVGQRVDTKMRAQALSVGEKFLELDILMENSSQETPVYVITEGSEPQFFTRFFTWDSAKSAMHGNSFERRLSIVKDGVKPKLDKPKRRPTTSSSHTGRSSVPEKSQRSRSMSFSPDRVRVRGRSPAFNALAANFENPNARNLSTPPPAIRKPSPKSPSSDPTKPPQRAASIAAISASFERPRPTLIPKSIKASPDVNKPQVEASKPKPEANGKDSTPSKDSPTVTPTIQEDLKEGQPENEEGLPVYPYERLRTSSINPVTDIDVTKRETYLSAAEFRERFGMTKEAFAKLPKWKQNRLKIALQLF.

6 Gelsolin-like repeats span residues Ala31 to Leu111, Thr151 to Lys219, Val273 to Phe339, Lys416 to Phe484, Ala536 to Ala576, and Asn643 to Phe714. The disordered stretch occupies residues Asp741–Leu908. Polar residues predominate over residues Thr755–Phe778. The span at Ala833–Ser842 shows a compositional bias: low complexity. Polar residues predominate over residues Lys878–Ile893. One can recognise an HP domain in the interval Glu905–Phe970.

It belongs to the villin/gelsolin family. Expressed in roots, young leaves, and inflorescences, mostly in the vasculature of roots, leaves, and filaments of the anthers and in epidermal cells of the elongation zone and root hairs. Also detected in guard cells.

It localises to the cytoplasm. The protein resides in the cytoskeleton. In terms of biological role, ca(2+)-regulated actin-binding protein. Binds actin microfilaments (MFs). Involved in actin filament bundling, severing and capping. Caps the barbed end of actin filaments and is able to sever them in a calcium-dependent manner. MF severing is promoted by VLN1. In Oryza sativa subsp. japonica (Rice), this protein is Villin-3.